A 251-amino-acid polypeptide reads, in one-letter code: Triosephosphate isomerase (251 aa).

Residue 9 to 11 participates in substrate binding; the sequence is NWK. Residue His-95 is the Electrophile of the active site. Catalysis depends on Glu-167, which acts as the Proton acceptor. Substrate contacts are provided by residues Gly-173, Ser-213, and 234-235; that span reads GG. Ser-213 bears the Phosphoserine mark.

This sequence belongs to the triosephosphate isomerase family. In terms of assembly, homodimer.

The protein localises to the cytoplasm. The enzyme catalyses D-glyceraldehyde 3-phosphate = dihydroxyacetone phosphate. It participates in carbohydrate biosynthesis; gluconeogenesis. It functions in the pathway carbohydrate degradation; glycolysis; D-glyceraldehyde 3-phosphate from glycerone phosphate: step 1/1. Its function is as follows. Involved in the gluconeogenesis. Catalyzes stereospecifically the conversion of dihydroxyacetone phosphate (DHAP) to D-glyceraldehyde-3-phosphate (G3P). The chain is Triosephosphate isomerase from Anoxybacillus flavithermus (strain DSM 21510 / WK1).